A 404-amino-acid chain; its full sequence is Cysteine desulfurase IscS (404 aa).

Residues A75–T76, N155, Q183, and S203–H205 each bind pyridoxal 5'-phosphate. K206 is subject to N6-(pyridoxal phosphate)lysine. T243 contributes to the pyridoxal 5'-phosphate binding site. The active-site Cysteine persulfide intermediate is C328. A [2Fe-2S] cluster-binding site is contributed by C328.

The protein belongs to the class-V pyridoxal-phosphate-dependent aminotransferase family. NifS/IscS subfamily. In terms of assembly, homodimer. Forms a heterotetramer with IscU, interacts with other sulfur acceptors. The cofactor is pyridoxal 5'-phosphate.

It is found in the cytoplasm. It catalyses the reaction (sulfur carrier)-H + L-cysteine = (sulfur carrier)-SH + L-alanine. It functions in the pathway cofactor biosynthesis; iron-sulfur cluster biosynthesis. In terms of biological role, master enzyme that delivers sulfur to a number of partners involved in Fe-S cluster assembly, tRNA modification or cofactor biosynthesis. Catalyzes the removal of elemental sulfur atoms from cysteine to produce alanine. Functions as a sulfur delivery protein for Fe-S cluster synthesis onto IscU, an Fe-S scaffold assembly protein, as well as other S acceptor proteins. This chain is Cysteine desulfurase IscS, found in Histophilus somni (strain 2336) (Haemophilus somnus).